Here is a 926-residue protein sequence, read N- to C-terminus: Neurofilament medium polypeptide (926 aa).

Residues 1-10 show a composition bias toward polar residues; it reads MSYTLDSLGN. Disordered regions lie at residues 1–51 and 79–102; these read MSYT…VSSS and QSSS…SNEK. Ser2 is modified (N-acetylserine). A head region spans residues 2–104; the sequence is SYTLDSLGNP…KLSRSNEKEQ (103 aa). The span at 21–44 shows a compositional bias: low complexity; that stretch reads RSSFSRISGSPSSGFRSQSWSRGS. A Phosphoserine modification is found at Ser30. Residue Arg42 is modified to Omega-N-methylarginine. A glycan (O-linked (GlcNAc) threonine) is linked at Thr47. Ser99 carries the phosphoserine modification. The region spanning 101–412 is the IF rod domain; that stretch reads EKEQIQGLND…KLLEGEETRF (312 aa). The segment at 105 to 136 is coil 1A; the sequence is IQGLNDRFAGYIEKVHYLEQQNKEIEAEIQAL. Residues 137 to 149 form a linker 1 region; the sequence is RQKQASHAQLGDA. The interval 150–248 is coil 1B; sequence YDQEIRELRA…EEEVADLLAQ (99 aa). Residue Ser226 is modified to Phosphoserine. The tract at residues 249 to 265 is linker 12; it reads IQASHITVERKDYLKTD. Positions 266 to 287 are coil 2A; that stretch reads ISTALKEIRSQLESHSDQNMHQ. Residues 288–291 are linker 2; the sequence is AEEW. The interval 292-412 is coil 2B; it reads FKCRYAKLTE…KLLEGEETRF (121 aa). Residue Tyr320 is modified to Phosphotyrosine. Residues Ser346, Ser418, Ser430, Ser468, and Ser484 each carry the phosphoserine modification. A tail region spans residues 413-926; it reads STFAGSITGP…AIVKEVTQSD (514 aa). Residues 487–860 form a disordered region; it reads EEVKEEEAEE…EKKGGDKSEE (374 aa). The span at 490-507 shows a compositional bias: acidic residues; the sequence is KEEEAEEKEEKEEAEEEV. The stretch at 512–516 is repeat 1; that stretch reads KSPVK. Residues 512–698 form a 17 X 5 AA approximate tandem repeats of K-S-P-[TVEA]-[AKETP] region; that stretch reads KSPVKATAPE…KSPAPKSPVE (187 aa). Residue Ser513 is modified to Phosphoserine. Residues 523 to 543 show a composition bias toward acidic residues; it reads KEEEGEKEEEEGQEEEEEEEE. The span at 544-563 shows a compositional bias: basic and acidic residues; that stretch reads AAKSDQAEEGGSEKEGSSEK. Residues Ser547, Ser555, Ser560, and Ser561 each carry the phosphoserine modification. A compositionally biased stretch (acidic residues) spans 564–584; sequence EEGEQEEEGETEAEGEGEEAA. Thr574 is subject to Phosphothreonine. A compositionally biased stretch (basic and acidic residues) spans 585-619; sequence AEAKEEKKMEEKAEEVAPKEELAAEAKVEKPEKAK. 16 repeat units span residues 619–623, 624–628, 629–633, 634–638, 639–643, 644–648, 649–653, 654–658, 659–663, 664–668, 669–673, 674–678, 679–683, 684–688, 689–693, and 694–698. Thr628 carries the post-translational modification Phosphothreonine. A phosphoserine mark is found at Ser630, Ser635, and Ser640. The residue at position 647 (Thr647) is a Phosphothreonine. A phosphoserine mark is found at Ser650 and Ser655. Phosphoserine occurs at positions 665 and 670. Residues 673–692 show a composition bias toward low complexity; sequence AKSPTAKSPTAKSPAAKSPA. Thr677 is modified (phosphothreonine). Phosphoserine occurs at positions 680, 685, 690, 695, 727, 751, 757, 771, 831, and 847. 3 stretches are compositionally biased toward basic and acidic residues: residues 696–764, 771–811, and 826–838; these read PVEE…EEVP, SPEK…KEDI, and TKEK…EEKG. The segment covering 849–860 has biased composition (basic and acidic residues); the sequence is GDEKKGGDKSEE.

Forms heterodimers with NEFL; which can further hetero-oligomerize (in vitro). Forms heterodimers with INA (in vitro). Post-translationally, phosphorylated on a number of serine residues in the repeated K-S-P tripeptide motif. Phosphorylation of NFH may result in the formation of interfilament cross-links that are important in the maintenance of axonal caliber. In terms of processing, phosphorylation seems to play a major role in the functioning of the larger neurofilament polypeptides (NF-M and NF-H), the levels of phosphorylation being altered developmentally and coincidentally with a change in the neurofilament function. Phosphorylated in the head and rod regions by the PKC kinase PKN1, leading to the inhibition of polymerization.

It localises to the cytoplasm. It is found in the cytoskeleton. The protein localises to the cell projection. The protein resides in the axon. Its function is as follows. Neurofilaments usually contain three intermediate filament proteins: NEFL, NEFM, and NEFH which are involved in the maintenance of neuronal caliber. May additionally cooperate with the neuronal intermediate filament proteins PRPH and INA to form neuronal filamentous networks. The chain is Neurofilament medium polypeptide (NEFM) from Bos taurus (Bovine).